The primary structure comprises 226 residues: 7-cyano-7-deazaguanine synthase (226 aa).

Residue 8–18 (ISGGLDSTTCL) coordinates ATP. Cys188, Cys198, Cys201, and Cys204 together coordinate Zn(2+).

Belongs to the QueC family. Requires Zn(2+) as cofactor.

The enzyme catalyses 7-carboxy-7-deazaguanine + NH4(+) + ATP = 7-cyano-7-deazaguanine + ADP + phosphate + H2O + H(+). Its pathway is purine metabolism; 7-cyano-7-deazaguanine biosynthesis. Functionally, catalyzes the ATP-dependent conversion of 7-carboxy-7-deazaguanine (CDG) to 7-cyano-7-deazaguanine (preQ(0)). The sequence is that of 7-cyano-7-deazaguanine synthase from Coxiella burnetii (strain RSA 493 / Nine Mile phase I).